The primary structure comprises 424 residues: MSKHPSRFAVAGVSHHTADVLALEAFRFGDEPAFLAAAQKKFAGALLLQTCNRVEVIVEGDAASLRDFLESQERKGFFLLEGREALRHLFSLAAGIDSMIVGEDQIIGQLKKSLADGEAACTASPFLSLCINKAVHVGVGVRRTTKINRGAVSVGSAAVLLAESELGTLEGRHILVVGSGEMGLLVAQALAAKHLTAMYVANRTFGRAVILAEKIGGVAVRMNELYHYITLSDVVISCTSAPHPVIHKTALKEAMRDRCWPVEGHPRPLILVDIAQPRDVEEGAGAIDGVRLFTIDDLRQVNEQTMSTRRAEAERAAEYVDDELDLFIRQLHRKSADDCIAALHTWAEAVRVRERDRALARLGNMDERTAGVIDDLSRVLTKKILTDATASIRACAEEGDRDAAEALVRALTRGSAADSREGTE.

Substrate-binding positions include 50–53 (TCNR), serine 98, 103–105 (EDQ), and glutamine 109. Cysteine 51 (nucleophile) is an active-site residue. 178–183 (GSGEMG) contributes to the NADP(+) binding site.

It belongs to the glutamyl-tRNA reductase family. As to quaternary structure, homodimer.

The catalysed reaction is (S)-4-amino-5-oxopentanoate + tRNA(Glu) + NADP(+) = L-glutamyl-tRNA(Glu) + NADPH + H(+). It functions in the pathway porphyrin-containing compound metabolism; protoporphyrin-IX biosynthesis; 5-aminolevulinate from L-glutamyl-tRNA(Glu): step 1/2. Functionally, catalyzes the NADPH-dependent reduction of glutamyl-tRNA(Glu) to glutamate 1-semialdehyde (GSA). This is Glutamyl-tRNA reductase from Methanoregula boonei (strain DSM 21154 / JCM 14090 / 6A8).